Consider the following 523-residue polypeptide: Putative F-box protein At1g30925 (523 aa).

One can recognise an F-box domain in the interval 4 to 44 (FPNDDLVYEILLRLPAKSVARCSCVSKLRRSILSRQDFTEL).

The polypeptide is Putative F-box protein At1g30925 (Arabidopsis thaliana (Mouse-ear cress)).